A 338-amino-acid polypeptide reads, in one-letter code: Phytanoyl-CoA dioxygenase, peroxisomal (338 aa).

The transit peptide at 1 to 30 directs the protein to the peroxisome; sequence MEQLRAAARLQIVLGHLGRPSAGAVVAHPT. Lys-59 and Lys-108 each carry N6-succinyllysine. 2-oxoglutarate-binding positions include Lys-120, Met-157, 175–177, and Trp-193; that span reads HQD. Fe cation-binding residues include His-175 and Asp-177. N6-succinyllysine occurs at positions 231 and 252. Fe cation is bound at residue His-264. Ser-266 and Arg-275 together coordinate 2-oxoglutarate. Ser-317 bears the Phosphoserine mark.

The protein belongs to the PhyH family. Interacts with FKBP52. Interacts with PHYHIP. The cofactor is Fe cation. It depends on L-ascorbate as a cofactor. ATP is required as a cofactor. Requires Mg(2+) as cofactor. In terms of tissue distribution, expressed in liver, kidney, and T-cells, but not in spleen, brain, heart, lung and skeletal muscle.

Its subcellular location is the peroxisome. The catalysed reaction is phytanoyl-CoA + 2-oxoglutarate + O2 = 2-hydroxyphytanoyl-CoA + succinate + CO2. It catalyses the reaction 3-methylhexadecanoyl-CoA + 2-oxoglutarate + O2 = 2-hydroxy-3-methylhexadecanoyl-CoA + succinate + CO2. It carries out the reaction hexadecanoyl-CoA + 2-oxoglutarate + O2 = 2-hydroxyhexadecanoyl-CoA + succinate + CO2. The enzyme catalyses octanoyl-CoA + 2-oxoglutarate + O2 = 2-hydroxyoctanoyl-CoA + succinate + CO2. The catalysed reaction is decanoyl-CoA + 2-oxoglutarate + O2 = 2-hydroxydecanoyl-CoA + succinate + CO2. It catalyses the reaction 3-methylbutanoyl-CoA + 2-oxoglutarate + O2 = 2-hydroxy-3-methylbutanoyl-CoA + succinate + CO2. It carries out the reaction heptadecanoyl-CoA + 2-oxoglutarate + O2 = 2-hydroxyheptadecanoyl-CoA + succinate + CO2. The enzyme catalyses eicosanoyl-CoA + 2-oxoglutarate + O2 = 2-hydroxyeicosanoyl-CoA + succinate + CO2. The catalysed reaction is octadecanoyl-CoA + 2-oxoglutarate + O2 = 2-hydroxyoctadecanoyl-CoA + succinate + CO2. It catalyses the reaction dodecanoyl-CoA + 2-oxoglutarate + O2 = 2-hydroxydodecanoyl-CoA + succinate + CO2. It carries out the reaction tetradecanoyl-CoA + 2-oxoglutarate + O2 = 2-hydroxytetradecanoyl-CoA + succinate + CO2. The enzyme catalyses hexanoyl-CoA + 2-oxoglutarate + O2 = 2-hydroxyhexanoyl-CoA + succinate + CO2. The catalysed reaction is butanoyl-CoA + 2-oxoglutarate + O2 = 2-hydroxybutanoyl-CoA + succinate + CO2. It catalyses the reaction 3-methylnonanoyl-CoA + 2-oxoglutarate + O2 = 2-hydroxy-3-methylnonanoyl-CoA + succinate + CO2. It carries out the reaction 3-methylundecanoyl-CoA + 2-oxoglutarate + O2 = 2-hydroxy-3-methylundecanoyl-CoA + succinate + CO2. The enzyme catalyses 3-methyldodecanoyl-CoA + 2-oxoglutarate + O2 = 2-hydroxy-3-methyldodecanoyl-CoA + succinate + CO2. It functions in the pathway lipid metabolism; fatty acid metabolism. Functionally, catalyzes the 2-hydroxylation of not only racemic phytanoyl-CoA and the isomers of 3-methylhexadecanoyl-CoA, but also a variety of other mono-branched 3-methylacyl-CoA esters (with a chain length of at least seven carbon atoms) and straight-chain acyl-CoA esters (with a chain length longer than four carbon atoms). Does not hydroxylate long and very long straight chain acyl-CoAs or 2-methyl- and 4-methyl-branched acyl-CoAs. The sequence is that of Phytanoyl-CoA dioxygenase, peroxisomal (PHYH) from Homo sapiens (Human).